We begin with the raw amino-acid sequence, 406 residues long: MAENGKNCDQRRVAMNKEQHNGNFTDPSSVNEKKRREREERQNIVLWRQPLITLQYFSLEILVILKEWTSKLWHRQSIVVSFLLLLAVLIATYYVEGAHQQYVQRIEKQFLLYAYWIGLGILSSVGLGTGLHTFLLYLGPHIASVTLAAYECNSVNFPEPPYPDQIICPDEGGTEGTISLWSIISKVRIEACMWGIGTAIGELPPYFMARAARLSGAEPDDEEYQEFEEMLEHAESAQDFASRAKLAVQKLVQKVGFFGILACASIPNPLFDLAGITCGHFLVPFWTFFGATLIGKAIIKMHIQKIFVIITFSKHIVEQMVAFIGAVPGIGPSLQKPFQEYLEAQRQKLHHKSEMGTPQGENWLSWMFEKLVVVMVCYFILSIINSMAQSYAKRIQQRLNSEEKTK.

Basic and acidic residues predominate over residues 1–20 (MAENGKNCDQRRVAMNKEQH). The interval 1–36 (MAENGKNCDQRRVAMNKEQHNGNFTDPSSVNEKKRR) is disordered. An N-acetylalanine modification is found at Ala2. Topologically, residues 2 to 43 (AENGKNCDQRRVAMNKEQHNGNFTDPSSVNEKKRREREERQN) are cytoplasmic. Polar residues predominate over residues 21-30 (NGNFTDPSSV). Residues 44-64 (IVLWRQPLITLQYFSLEILVI) traverse the membrane as a helical segment. The Extracellular segment spans residues 65-77 (LKEWTSKLWHRQS). A helical membrane pass occupies residues 78 to 98 (IVVSFLLLLAVLIATYYVEGA). The Cytoplasmic segment spans residues 99 to 109 (HQQYVQRIEKQ). The helical transmembrane segment at 110-130 (FLLYAYWIGLGILSSVGLGTG) threads the bilayer. Residues 131–250 (LHTFLLYLGP…ASRAKLAVQK (120 aa)) lie on the Extracellular side of the membrane. Positions 173-316 (GTEGTISLWS…FVIITFSKHI (144 aa)) are VTT domain. A helical transmembrane segment spans residues 251–271 (LVQKVGFFGILACASIPNPLF). The Cytoplasmic portion of the chain corresponds to 272-273 (DL). A helical transmembrane segment spans residues 274 to 294 (AGITCGHFLVPFWTFFGATLI). At 295 to 305 (GKAIIKMHIQK) the chain is on the extracellular side. The helical transmembrane segment at 306–326 (IFVIITFSKHIVEQMVAFIGA) threads the bilayer. At 327–363 (VPGIGPSLQKPFQEYLEAQRQKLHHKSEMGTPQGENW) the chain is on the cytoplasmic side. A helical transmembrane segment spans residues 364 to 384 (LSWMFEKLVVVMVCYFILSII). Residues 385–406 (NSMAQSYAKRIQQRLNSEEKTK) are Extracellular-facing.

The protein belongs to the VMP1 family. In terms of assembly, interacts with BECN1. Interacts with TJP1. Interacts with TP53INP2. Interacts with TMEM41B. Interacts with ATP2A2, PLN and SLN; competes with PLN and SLN to prevent them from forming an inhibitory complex with ATP2A2. Interacts with ATG2A.

The protein resides in the endoplasmic reticulum-Golgi intermediate compartment membrane. It localises to the cell membrane. Its subcellular location is the vacuole membrane. The protein localises to the endoplasmic reticulum membrane. It carries out the reaction a 1,2-diacyl-sn-glycero-3-phospho-L-serine(in) = a 1,2-diacyl-sn-glycero-3-phospho-L-serine(out). It catalyses the reaction cholesterol(in) = cholesterol(out). The enzyme catalyses a 1,2-diacyl-sn-glycero-3-phosphocholine(in) = a 1,2-diacyl-sn-glycero-3-phosphocholine(out). The catalysed reaction is a 1,2-diacyl-sn-glycero-3-phosphoethanolamine(in) = a 1,2-diacyl-sn-glycero-3-phosphoethanolamine(out). Phospholipid scramblase involved in lipid homeostasis and membrane dynamics processes. Has phospholipid scramblase activity toward cholesterol and phosphatidylserine, as well as phosphatidylethanolamine and phosphatidylcholine. Required for autophagosome formation: participates in early stages of autophagosome biogenesis at the endoplasmic reticulum (ER) membrane by reequilibrating the leaflets of the ER as lipids are extracted by ATG2 (ATG2A or ATG2B) to mediate autophagosome assembly. Regulates ATP2A2 activity to control ER-isolation membrane contacts for autophagosome formation. In addition to autophagy, involved in other processes in which phospholipid scramblase activity is required. Modulates ER contacts with lipid droplets, mitochondria and endosomes. Plays an essential role in formation of cell junctions. Upon stress such as bacterial and viral infection, promotes formation of cytoplasmic vacuoles followed by cell death. Involved in the cytoplasmic vacuolization of acinar cells during the early stage of acute pancreatitis. The polypeptide is Vacuole membrane protein 1 (Pongo abelii (Sumatran orangutan)).